The sequence spans 321 residues: Lipoyl synthase (321 aa).

Residues Cys-68, Cys-73, Cys-79, Cys-94, Cys-98, Cys-101, and Ser-308 each contribute to the [4Fe-4S] cluster site. The region spanning 80–297 (FNHGTATFMI…KQEALAMGFT (218 aa)) is the Radical SAM core domain.

The protein belongs to the radical SAM superfamily. Lipoyl synthase family. It depends on [4Fe-4S] cluster as a cofactor.

The protein localises to the cytoplasm. The enzyme catalyses [[Fe-S] cluster scaffold protein carrying a second [4Fe-4S](2+) cluster] + N(6)-octanoyl-L-lysyl-[protein] + 2 oxidized [2Fe-2S]-[ferredoxin] + 2 S-adenosyl-L-methionine + 4 H(+) = [[Fe-S] cluster scaffold protein] + N(6)-[(R)-dihydrolipoyl]-L-lysyl-[protein] + 4 Fe(3+) + 2 hydrogen sulfide + 2 5'-deoxyadenosine + 2 L-methionine + 2 reduced [2Fe-2S]-[ferredoxin]. It functions in the pathway protein modification; protein lipoylation via endogenous pathway; protein N(6)-(lipoyl)lysine from octanoyl-[acyl-carrier-protein]: step 2/2. In terms of biological role, catalyzes the radical-mediated insertion of two sulfur atoms into the C-6 and C-8 positions of the octanoyl moiety bound to the lipoyl domains of lipoate-dependent enzymes, thereby converting the octanoylated domains into lipoylated derivatives. This is Lipoyl synthase from Sodalis glossinidius (strain morsitans).